The sequence spans 171 residues: CASP-like protein 5A2 (171 aa).

At 1-39 the chain is on the cytoplasmic side; that stretch reads MDGSAHLRDPPGPAVLRWRLEDMHIIPGTSGSLALRICQ. The chain crosses the membrane as a helical span at residues 40-60; that stretch reads FSAAIVSFSVMISAANFSSVT. Ala61 is a topological domain (extracellular). A helical transmembrane segment spans residues 62 to 82; sequence FCFLVAAMVLQCMWSLSVATI. At 83–106 the chain is on the cytoplasmic side; that stretch reads EGYAMLVGRSLRDSPLLSLFAVGD. A helical transmembrane segment spans residues 107–127; sequence WVTAVITFAGACASAGIAVLV. The Extracellular segment spans residues 128 to 148; that stretch reads GRDIHRGCDVNFCGRYAAAAG. A helical membrane pass occupies residues 149-169; that stretch reads MAFLSWLLISTSFLFTFWLLA. The Cytoplasmic portion of the chain corresponds to 170–171; sequence TR.

Belongs to the Casparian strip membrane proteins (CASP) family. In terms of assembly, homodimer and heterodimers.

The protein localises to the cell membrane. This is CASP-like protein 5A2 from Pteridium aquilinum subsp. aquilinum (Bracken fern).